The following is a 116-amino-acid chain: MTNKIIQQLEAEQMSKEIPAFAPGDTVIVQVKVKEGERQRLQAFEGVVIGKRNRGLNSAFTVRKISSGVGVERTFQTYSPLVDSITVKRRGDVRKAKLYYLRDLSGKAARIKEKLS.

This sequence belongs to the bacterial ribosomal protein bL19 family.

Functionally, this protein is located at the 30S-50S ribosomal subunit interface and may play a role in the structure and function of the aminoacyl-tRNA binding site. This Azotobacter vinelandii (strain DJ / ATCC BAA-1303) protein is Large ribosomal subunit protein bL19.